A 127-amino-acid polypeptide reads, in one-letter code: Aspartate 1-decarboxylase (127 aa).

Catalysis depends on serine 25, which acts as the Schiff-base intermediate with substrate; via pyruvic acid. Serine 25 is modified (pyruvic acid (Ser)). Residue threonine 57 participates in substrate binding. The Proton donor role is filled by tyrosine 58. Residue 73–75 (GAA) participates in substrate binding.

The protein belongs to the PanD family. Heterooctamer of four alpha and four beta subunits. Pyruvate serves as cofactor. Post-translationally, is synthesized initially as an inactive proenzyme, which is activated by self-cleavage at a specific serine bond to produce a beta-subunit with a hydroxyl group at its C-terminus and an alpha-subunit with a pyruvoyl group at its N-terminus.

The protein resides in the cytoplasm. The enzyme catalyses L-aspartate + H(+) = beta-alanine + CO2. The protein operates within cofactor biosynthesis; (R)-pantothenate biosynthesis; beta-alanine from L-aspartate: step 1/1. Functionally, catalyzes the pyruvoyl-dependent decarboxylation of aspartate to produce beta-alanine. The sequence is that of Aspartate 1-decarboxylase from Clostridium kluyveri (strain NBRC 12016).